The sequence spans 430 residues: C4-dicarboxylate transport protein (430 aa).

Transmembrane regions (helical) follow at residues 8 to 28 (SLYFQVLTAITLGVLLGHFYP), 44 to 64 (LIKMIIAPVIFCTVVTGIAGM), 76 to 96 (IALLYFEIVSTIALLIGLVIV), 144 to 164 (AFASGNILQVLLFAVLFGFAL), 184 to 204 (VIFGIINMIMRLAPIGAFGAM), 222 to 242 (LIICFYITCVLFVVVVLGSIA), 289 to 309 (VVGLVIPTGYSFNLDGTSIYL), 326 to 346 (VIHQVTLLVVLLLSSKGAAGV), and 352 to 372 (IVLAATISAVGHLPLAGLALI).

This sequence belongs to the dicarboxylate/amino acid:cation symporter (DAACS) (TC 2.A.23) family.

The protein localises to the cell inner membrane. In terms of biological role, responsible for the transport of dicarboxylates such as succinate, fumarate, and malate from the periplasm across the membrane. In Yersinia enterocolitica serotype O:8 / biotype 1B (strain NCTC 13174 / 8081), this protein is C4-dicarboxylate transport protein.